The chain runs to 103 residues: Small ribosomal subunit protein uS10 (103 aa).

The protein belongs to the universal ribosomal protein uS10 family. As to quaternary structure, part of the 30S ribosomal subunit.

In terms of biological role, involved in the binding of tRNA to the ribosomes. This is Small ribosomal subunit protein uS10 from Chlorobium phaeobacteroides (strain DSM 266 / SMG 266 / 2430).